Consider the following 156-residue polypeptide: UPF0523 protein C (156 aa).

This sequence belongs to the UPF0523 family.

This Dictyostelium discoideum (Social amoeba) protein is UPF0523 protein C.